A 47-amino-acid polypeptide reads, in one-letter code: PhoP/PhoQ regulator MgrB (47 aa).

Residues tryptophan 6–valine 26 form a helical membrane-spanning segment.

It belongs to the MgrB family. May form homooligomers. Probably interacts with the periplasmic domain of PhoQ.

It localises to the cell inner membrane. PhoP-regulated transcription is redox-sensitive, being activated when the periplasm becomes more reducing. MgrB acts between DsbA/DsbB and PhoP/PhoQ in this pathway. Represses PhoP/PhoQ signaling, possibly by binding to the periplasmic domain of PhoQ, altering its activity and that of downstream effector PhoP. The chain is PhoP/PhoQ regulator MgrB from Enterobacter sp. (strain 638).